The sequence spans 128 residues: Protein SOB FIVE-LIKE 3 (128 aa).

2 disordered regions span residues 1–26 (MERE…EEEE) and 54–128 (KDSD…HKKK). A compositionally biased stretch (polar residues) spans 8 to 18 (SSESGWTTYIS). Positions 11-16 (SGWTTY) match the SOFL-A motif. Residues 59–68 (SMASDASSGP) carry the SOFL-B motif. Basic and acidic residues predominate over residues 80 to 104 (REGLALRNGKGESNDVYSHRIDDKN). The Nuclear localization signal motif lies at 111–118 (RKKEKKKS).

It belongs to the SOFL plant protein family. As to expression, expressed in seedlings, roots, flowers and siliques.

The protein resides in the cytoplasm. It localises to the nucleus. Involved in cytokinin-mediated development. The sequence is that of Protein SOB FIVE-LIKE 3 from Arabidopsis thaliana (Mouse-ear cress).